Consider the following 233-residue polypeptide: Superoxide dismutase [Mn], mitochondrial (233 aa).

The N-terminal 26 residues, 1–26, are a transit peptide targeting the mitochondrion; sequence MFAKTAAANLTKKGGLSLLSTTARRT. The Mn(2+) site is built by histidine 52 and histidine 107. Residues threonine 147 and threonine 149 each carry the phosphothreonine modification. 2 residues coordinate Mn(2+): aspartate 194 and histidine 198.

Belongs to the iron/manganese superoxide dismutase family. Homotetramer. Mn(2+) serves as cofactor.

It localises to the mitochondrion matrix. It catalyses the reaction 2 superoxide + 2 H(+) = H2O2 + O2. Destroys superoxide anion radicals which are normally produced within the cells and which are toxic to biological systems. The chain is Superoxide dismutase [Mn], mitochondrial (SOD2) from Saccharomyces cerevisiae (strain ATCC 204508 / S288c) (Baker's yeast).